Consider the following 657-residue polypeptide: 1-deoxy-D-xylulose-5-phosphate synthase (657 aa).

Residues H73 and 113–115 (SHA) contribute to the thiamine diphosphate site. Position 145 (D145) interacts with Mg(2+). Thiamine diphosphate is bound by residues 146–147 (GA), N175, Y293, and E375. Residue N175 participates in Mg(2+) binding.

It belongs to the transketolase family. DXPS subfamily. Homodimer. Mg(2+) is required as a cofactor. Requires thiamine diphosphate as cofactor.

The catalysed reaction is D-glyceraldehyde 3-phosphate + pyruvate + H(+) = 1-deoxy-D-xylulose 5-phosphate + CO2. It functions in the pathway metabolic intermediate biosynthesis; 1-deoxy-D-xylulose 5-phosphate biosynthesis; 1-deoxy-D-xylulose 5-phosphate from D-glyceraldehyde 3-phosphate and pyruvate: step 1/1. Catalyzes the acyloin condensation reaction between C atoms 2 and 3 of pyruvate and glyceraldehyde 3-phosphate to yield 1-deoxy-D-xylulose-5-phosphate (DXP). This chain is 1-deoxy-D-xylulose-5-phosphate synthase, found in Pseudarthrobacter chlorophenolicus (strain ATCC 700700 / DSM 12829 / CIP 107037 / JCM 12360 / KCTC 9906 / NCIMB 13794 / A6) (Arthrobacter chlorophenolicus).